The sequence spans 257 residues: MLAKRLVPCLDVKDGKVVKGVQFRNHEIVGDIVPLAARYAEEGADELVFYDITASAHERVVDKSWVSRVAEQIDIPFCVAGGIKTISQARELLAFGADKISINSPALTDPSLISRLQDEFGRQCIVIGIDSFFDASSNSYKVKQFTGDEAATKDTQWFTQDWVEEVQKRGCGEIVLNVMNQDGVRGGYDIKQLSLVRAICDVPLIASGGAGAMAHFRDVFIEAKVDAALAASVFHKAIINIGELKAYLAAEGIAIRR.

Active-site residues include Asp-11 and Asp-130.

Belongs to the HisA/HisF family. As to quaternary structure, heterodimer of HisH and HisF.

It is found in the cytoplasm. It carries out the reaction 5-[(5-phospho-1-deoxy-D-ribulos-1-ylimino)methylamino]-1-(5-phospho-beta-D-ribosyl)imidazole-4-carboxamide + L-glutamine = D-erythro-1-(imidazol-4-yl)glycerol 3-phosphate + 5-amino-1-(5-phospho-beta-D-ribosyl)imidazole-4-carboxamide + L-glutamate + H(+). The protein operates within amino-acid biosynthesis; L-histidine biosynthesis; L-histidine from 5-phospho-alpha-D-ribose 1-diphosphate: step 5/9. IGPS catalyzes the conversion of PRFAR and glutamine to IGP, AICAR and glutamate. The HisF subunit catalyzes the cyclization activity that produces IGP and AICAR from PRFAR using the ammonia provided by the HisH subunit. This chain is Imidazole glycerol phosphate synthase subunit HisF, found in Shewanella putrefaciens (strain CN-32 / ATCC BAA-453).